Consider the following 904-residue polypeptide: Toll-like receptor 3 (904 aa).

Residues 1 to 26 (MSRPLPYHIHFFSGLLTCWILCTSSA) form the signal peptide. Residues 27–52 (HKCTVRHEVADCSHLKLTQIPDDLPT) form the LRRNT domain. At 27-705 (HKCTVRHEVA…PCKDSAPFEL (679 aa)) the chain is on the lumenal side. The cysteines at positions 29 and 38 are disulfide-linked. Asparagine 53, asparagine 58, and asparagine 71 each carry an N-linked (GlcNAc...) asparagine glycan. LRR repeat units lie at residues 53–74 (NITVLNLTHNQLRRLPPANFTR), 77–98 (QLTTLDGGFNSISKLEPELCQS), 101–122 (WLEILNLQHNEISQLSDKTFIF), 125–146 (NLTELHLMSNSIQKIKNDPFKN), 149–170 (NLIKLDLSHNGLSSTKLGTQLQ), and 173–194 (NLQELLLSNNKISSLTPGEFDF). Residues cysteine 96 and cysteine 123 are joined by a disulfide bond. Asparagine 125 carries an N-linked (GlcNAc...) asparagine glycan. Residue asparagine 197 is glycosylated (N-linked (GlcNAc...) asparagine). 2 LRR repeats span residues 199–220 (SLKRLELSSNQIKEFSPGCFHT) and 223–245 (ELSGLSLNNAKLSPSLTEKLCLE). Residues asparagine 248, asparagine 253, asparagine 276, and asparagine 292 are each glycosylated (N-linked (GlcNAc...) asparagine). LRR repeat units follow at residues 250–271 (SIENLSLSSNQLDTISHTTFDG), 276–297 (NLTTLDLSRNSLRVMGNDSFAW), 300–321 (HLEYLSLEYNNIEHLSSRSFYG), 324–345 (NLRRLDLRRSFTRQSISLTSLP), 357–378 (CLEYLNMDDNNFPGIKRNTFTG), 381–401 (RLKFLSLSNSFSSLRTLTNET), 409–430 (PLLLLDLTKNKISKIQSGAFSW), 433–455 (HLEVLDLGLNEIGQELTGQEWRG), 466–487 (YNKYLELTTNSFTSVPSLQRLM), 508–529 (NLVILDLSNNNIANINDELLKG), 532–553 (KLEILDLQHNNLARLWKHANPG), 564–585 (HLHILNLGSNGFDEIPVEAFKD), 588–609 (ELKSIDLGMNNLNILPQSVFDN), and 612–633 (SLKSLSLQKNLITSVQKTVFGP). Residue asparagine 399 is glycosylated (N-linked (GlcNAc...) asparagine). 3 N-linked (GlcNAc...) asparagine glycosylation sites follow: asparagine 637, asparagine 663, and asparagine 668. Residues 646–699 (NPFDCTCESIAWFVNWINITHTNISELSNHYLCNTPPQYHGYPVMLFDVSPCKD) enclose the LRRCT domain. Cystine bridges form between cysteine 650/cysteine 678 and cysteine 652/cysteine 697. A helical membrane pass occupies residues 706–726 (LFMININILLIFIFIVLLIHF). The Cytoplasmic segment spans residues 727-904 (EGWRISFYWN…VALGSRNSAH (178 aa)). One can recognise a TIR domain in the interval 754–897 (FEYAAYIIHA…AFHHKLKVAL (144 aa)). Tyrosine 759 carries the phosphotyrosine modification. Glycyl lysine isopeptide (Lys-Gly) (interchain with G-Cter in ubiquitin) cross-links involve residues lysine 765, lysine 812, and lysine 831. Tyrosine 858 carries the phosphotyrosine modification.

The protein belongs to the Toll-like receptor family. In terms of assembly, monomer and homodimer; dimerization is triggered by ligand-binding, the signaling unit is composed of one ds-RNA of around 40 bp and two TLR3 molecules, and lateral clustering of signaling units along the length of the ds-RNA ligand is required for TLR3 signal transduction. Interacts (via transmembrane domain) with UNC93B1; the interaction is required for transport from the ER to the endosomes. Interacts with TICAM1 (via the TIR domain) in response to poly(I:C) and this interaction is enhanced in the presence of WDFY1. Interacts with SRC; upon binding of double-stranded RNA. The tyrosine-phosphorylated form (via TIR domain) interacts with WDFY1 (via WD repeat 2) in response to poly(I:C). TLR3 signaling requires a proteolytic cleavage mediated by cathepsins CTSB and CTSH, the cleavage occurs between amino acids 252 and 346. The cleaved form of TLR3 is the predominant form found in endosomes. In terms of processing, ubiquitinated by TRIM3; leading to recognition and sorting of polyubiquitinated TLR3 by the ESCRT complexes. Ubiquitinated by ZNRF1 via 'Lys-63'-linked ubiquitin chains; leading to TLR3 lysosomal trafficking and degradation. Ubiquitinated by RNF170 at Lys-765 via 'Lys-48'-linked ubiquitin chains; leading to TLR3 proteasomal degradation.

The protein localises to the endoplasmic reticulum membrane. Its subcellular location is the endosome membrane. The protein resides in the early endosome. Functionally, key component of innate and adaptive immunity. TLRs (Toll-like receptors) control host immune response against pathogens through recognition of molecular patterns specific to microorganisms. TLR3 is a nucleotide-sensing TLR which is activated by double-stranded RNA, a sign of viral infection. Acts via the adapter TRIF/TICAM1, leading to NF-kappa-B activation, IRF3 nuclear translocation, cytokine secretion and the inflammatory response. The sequence is that of Toll-like receptor 3 (TLR3) from Bos taurus (Bovine).